The following is a 352-amino-acid chain: D-alanine--D-alanine ligase (352 aa).

The region spanning 135–344 (KTVFAKAGLP…FPQLVDRLIE (210 aa)) is the ATP-grasp domain. 171–226 (EETLNYPCFVKPANLGSSVGIAKVRSRSELEKALDQAASYDRRIIVEAGVIAREVE) contributes to the ATP binding site. The Mg(2+) site is built by Asp297, Glu311, and Asn313.

It belongs to the D-alanine--D-alanine ligase family. Mg(2+) serves as cofactor. The cofactor is Mn(2+).

Its subcellular location is the cytoplasm. It carries out the reaction 2 D-alanine + ATP = D-alanyl-D-alanine + ADP + phosphate + H(+). Its pathway is cell wall biogenesis; peptidoglycan biosynthesis. In terms of biological role, cell wall formation. In Gloeothece citriformis (strain PCC 7424) (Cyanothece sp. (strain PCC 7424)), this protein is D-alanine--D-alanine ligase.